A 368-amino-acid chain; its full sequence is Phosphoserine aminotransferase (368 aa).

Arg44 contributes to the L-glutamate binding site. Residues 78 to 79 (AT), Trp104, Thr157, Asp179, and Gln202 each bind pyridoxal 5'-phosphate. Lys203 is subject to N6-(pyridoxal phosphate)lysine. A pyridoxal 5'-phosphate-binding site is contributed by 244-245 (NT).

The protein belongs to the class-V pyridoxal-phosphate-dependent aminotransferase family. SerC subfamily. As to quaternary structure, homodimer. It depends on pyridoxal 5'-phosphate as a cofactor.

Its subcellular location is the cytoplasm. The enzyme catalyses O-phospho-L-serine + 2-oxoglutarate = 3-phosphooxypyruvate + L-glutamate. It catalyses the reaction 4-(phosphooxy)-L-threonine + 2-oxoglutarate = (R)-3-hydroxy-2-oxo-4-phosphooxybutanoate + L-glutamate. It participates in amino-acid biosynthesis; L-serine biosynthesis; L-serine from 3-phospho-D-glycerate: step 2/3. The protein operates within cofactor biosynthesis; pyridoxine 5'-phosphate biosynthesis; pyridoxine 5'-phosphate from D-erythrose 4-phosphate: step 3/5. Functionally, catalyzes the reversible conversion of 3-phosphohydroxypyruvate to phosphoserine and of 3-hydroxy-2-oxo-4-phosphonooxybutanoate to phosphohydroxythreonine. The protein is Phosphoserine aminotransferase of Neisseria meningitidis serogroup B (strain ATCC BAA-335 / MC58).